A 977-amino-acid chain; its full sequence is Ubiquitin-like modifier-activating enzyme 7 (977 aa).

It belongs to the ubiquitin-activating E1 family. Ubiquitinated by RNF170.

It is found in the cytoplasm. It localises to the nucleus. The protein operates within protein modification; protein ubiquitination. E1-activating enzyme that catalyzes the covalent conjugation of the ubiquitin-like protein product of ISG15 to additional interferons stimulated proteins (ISGs) as well as other cellular proteins such as P53 in a process termed protein ISGylation. Plays an essential role in antiviral immunity together with ISG15 by restricting the replication of many viruses including rabies virus, influenza virus, sindbis virus or rotavirus. This Mus musculus (Mouse) protein is Ubiquitin-like modifier-activating enzyme 7.